A 345-amino-acid chain; its full sequence is MFGGLKNFIKEKSEALAGIHRESDESCGFRVLKVENDSKAYNARIESYYDFITAVNGILLNGDPSMFMALLRDSSPEVTLEVFSLKGQITRKVNIKINSDEKIGMVLQWASIAPAVDAIWHILNVIDDSPVARASLVPYEDYIVGTPEGMMTGEKALSDLIESHLNRPLRLYIYNHYRDSTRQVTIVPNRHWGGNGAIGCGVGHGVLHRLPAPLSGPPPQPGDIVFSNPMLGGPDHKVSQPSETENFLPTPEPPKIASANAGSSNEISIPHYQRHKKSHKGAIQDSSIQSYLDEEEKLSRELDHKTKDASSTNDSQTTPLPPPPPVAVNSTNDESAPQNEELVKN.

PDZ GRASP-type domains are found at residues cysteine 27 to isoleucine 112 and alanine 118 to leucine 207. The interval cysteine 27 to aspartate 223 is GRASP. The interval proline 229 to asparagine 345 is disordered. Over residues lysine 297–aspartate 308 the composition is skewed to basic and acidic residues. Polar residues-rich tracts occupy residues alanine 309–threonine 318 and valine 328–glutamine 338.

It is found in the golgi apparatus membrane. This is an uncharacterized protein from Schizosaccharomyces pombe (strain 972 / ATCC 24843) (Fission yeast).